Consider the following 290-residue polypeptide: ATP phosphoribosyltransferase (290 aa).

It belongs to the ATP phosphoribosyltransferase family. Long subfamily. Mg(2+) is required as a cofactor.

It is found in the cytoplasm. It catalyses the reaction 1-(5-phospho-beta-D-ribosyl)-ATP + diphosphate = 5-phospho-alpha-D-ribose 1-diphosphate + ATP. Its pathway is amino-acid biosynthesis; L-histidine biosynthesis; L-histidine from 5-phospho-alpha-D-ribose 1-diphosphate: step 1/9. Its activity is regulated as follows. Feedback inhibited by histidine. Catalyzes the condensation of ATP and 5-phosphoribose 1-diphosphate to form N'-(5'-phosphoribosyl)-ATP (PR-ATP). Has a crucial role in the pathway because the rate of histidine biosynthesis seems to be controlled primarily by regulation of HisG enzymatic activity. In Saccharolobus solfataricus (strain ATCC 35092 / DSM 1617 / JCM 11322 / P2) (Sulfolobus solfataricus), this protein is ATP phosphoribosyltransferase (hisG).